We begin with the raw amino-acid sequence, 284 residues long: Tryptophan 2,3-dioxygenase (284 aa).

Substrate is bound by residues 53–57 (FIIQH) and Arg119. His242 contacts heme. Thr256 is a binding site for substrate.

This sequence belongs to the tryptophan 2,3-dioxygenase family. Homotetramer. Heme serves as cofactor.

It catalyses the reaction L-tryptophan + O2 = N-formyl-L-kynurenine. Its pathway is amino-acid degradation; L-tryptophan degradation via kynurenine pathway; L-kynurenine from L-tryptophan: step 1/2. The protein operates within siderophore biosynthesis; quinolobactin biosynthesis. Functionally, heme-dependent dioxygenase that catalyzes the oxidative cleavage of the L-tryptophan (L-Trp) pyrrole ring and converts L-tryptophan to N-formyl-L-kynurenine. Catalyzes the oxidative cleavage of the indole moiety. Required for synthesis of the siderophore quinolobactin. This is Tryptophan 2,3-dioxygenase from Pseudomonas fluorescens.